Reading from the N-terminus, the 438-residue chain is MVLLYTPKQKTKNVQTITADILDLDYQGLGVAKINGKTWFIENALPHEKVECRILEDKRQYGHAIVKKWRVKSPERLEPKCAHFMRCGGCQGQHIPIEMQRKAKESALFKRLSKLQSEPISFQPMICGDAWAYRRRVRLSLWFNPSTKQIEMGFRQKNTNDLIPVQSCEVAEPAINYLLPKLTALLEKFSAPKQLGHIELVAADNGVAMLLRYTKNLAEIDRTLLLKFAEQEKLMLFLQSDKGIEQIYGDAPYYQFSDGIKLHFDIRDFIQVNSALNEPMVNTALDWLELSQQDCVLDLFCGMGNFTLPLAKRVKSAVGIEGVFEMVQKAAQNAERNQIKNIEFFQADLDQSFVEQPWANQSFNKILLDPPRSGAAFALNALCELKAEKILYVSCNPATLVRDAEILCNFGYKIEKSAVIDMFPHTGHLESITLFTTK.

One can recognise a TRAM domain in the interval 10-68 (KTKNVQTITADILDLDYQGLGVAKINGKTWFIENALPHEKVECRILEDKRQYGHAIVKK). Residues cysteine 81, cysteine 87, cysteine 90, and cysteine 168 each coordinate [4Fe-4S] cluster. 6 residues coordinate S-adenosyl-L-methionine: glutamine 271, phenylalanine 300, asparagine 305, glutamate 321, aspartate 348, and aspartate 369. Cysteine 395 functions as the Nucleophile in the catalytic mechanism.

The protein belongs to the class I-like SAM-binding methyltransferase superfamily. RNA M5U methyltransferase family. RlmD subfamily.

The enzyme catalyses uridine(1939) in 23S rRNA + S-adenosyl-L-methionine = 5-methyluridine(1939) in 23S rRNA + S-adenosyl-L-homocysteine + H(+). Catalyzes the formation of 5-methyl-uridine at position 1939 (m5U1939) in 23S rRNA. The sequence is that of 23S rRNA (uracil(1939)-C(5))-methyltransferase RlmD from Haemophilus influenzae (strain ATCC 51907 / DSM 11121 / KW20 / Rd).